We begin with the raw amino-acid sequence, 285 residues long: Pseudouridine-5'-phosphate glycosidase (285 aa).

E17 serves as the catalytic Proton donor. Substrate-binding residues include K77 and V97. D126 contacts Mn(2+). Residue 128 to 130 coordinates substrate; it reads SQD. K147 acts as the Nucleophile in catalysis.

This sequence belongs to the pseudouridine-5'-phosphate glycosidase family. In terms of assembly, homotrimer. The cofactor is Mn(2+).

The catalysed reaction is D-ribose 5-phosphate + uracil = psi-UMP + H2O. In terms of biological role, catalyzes the reversible cleavage of pseudouridine 5'-phosphate (PsiMP) to ribose 5-phosphate and uracil. Functions biologically in the cleavage direction, as part of a pseudouridine degradation pathway. This is Pseudouridine-5'-phosphate glycosidase from Thermotoga maritima (strain ATCC 43589 / DSM 3109 / JCM 10099 / NBRC 100826 / MSB8).